The sequence spans 362 residues: Putative protein ARB2BP (362 aa).

The chain crosses the membrane as a helical span at residues 229–245 (IAFIVHGYGGLVFMDLL).

This sequence belongs to the ARB2 family.

It localises to the membrane. This Homo sapiens (Human) protein is Putative protein ARB2BP.